The primary structure comprises 181 residues: Isopentenyl-diphosphate Delta-isomerase (181 aa).

Positions 25 and 32 each coordinate Mn(2+). Residues 30-164 (PLHLAFSCWL…PWAFSPWMVM (135 aa)) enclose the Nudix hydrolase domain. Cys67 is an active-site residue. Mg(2+) is bound at residue Cys67. A Mn(2+)-binding site is contributed by His69. Glu87 contributes to the Mg(2+) binding site. Glu114 and Glu116 together coordinate Mn(2+). The active site involves Glu116.

This sequence belongs to the IPP isomerase type 1 family. As to quaternary structure, homodimer. Mg(2+) serves as cofactor. Mn(2+) is required as a cofactor.

The protein resides in the cytoplasm. It carries out the reaction isopentenyl diphosphate = dimethylallyl diphosphate. The protein operates within isoprenoid biosynthesis; dimethylallyl diphosphate biosynthesis; dimethylallyl diphosphate from isopentenyl diphosphate: step 1/1. Functionally, catalyzes the 1,3-allylic rearrangement of the homoallylic substrate isopentenyl (IPP) to its highly electrophilic allylic isomer, dimethylallyl diphosphate (DMAPP). The protein is Isopentenyl-diphosphate Delta-isomerase of Salmonella typhi.